A 657-amino-acid chain; its full sequence is Tetracycline resistance protein TetQ (657 aa).

The 244-residue stretch at 17 to 260 folds into the tr-type G domain; it reads MNIINLGILA…AISSFILPPE (244 aa). Residues 26 to 33, 90 to 94, and 144 to 147 contribute to the GTP site; these read AHIDAGKT, DTPGH, and NKID.

This sequence belongs to the TRAFAC class translation factor GTPase superfamily. Classic translation factor GTPase family. TetM/TetO subfamily.

In terms of biological role, abolishes the inhibitory effect of tetracycline on protein synthesis by non-covalently modifying ribosomes. Confers mild resistance to tetracycline when expressed in E.coli. The polypeptide is Tetracycline resistance protein TetQ (tetQ) (Bacteroides fragilis).